We begin with the raw amino-acid sequence, 249 residues long: 5'-nucleotidase SurE (249 aa).

Positions 8, 9, 39, and 96 each coordinate a divalent metal cation.

This sequence belongs to the SurE nucleotidase family. It depends on a divalent metal cation as a cofactor.

The protein resides in the cytoplasm. It catalyses the reaction a ribonucleoside 5'-phosphate + H2O = a ribonucleoside + phosphate. Nucleotidase that shows phosphatase activity on nucleoside 5'-monophosphates. This is 5'-nucleotidase SurE from Clostridium tetani (strain Massachusetts / E88).